The primary structure comprises 550 residues: Protein UshA (550 aa).

The N-terminal stretch at M1–A25 is a signal peptide. Residues D41, H43, D84, N116, H217, H252, and Q254 each coordinate Zn(2+). A disulfide bridge links C258 with C275. Substrate is bound by residues F429 and F498–D504.

This sequence belongs to the 5'-nucleotidase family. Monomer. Zn(2+) is required as a cofactor.

It localises to the periplasm. It catalyses the reaction UDP-sugar + H2O = UMP + alpha-D-aldose 1-phosphate.. It carries out the reaction a ribonucleoside 5'-phosphate + H2O = a ribonucleoside + phosphate. In terms of biological role, degradation of external UDP-glucose to uridine monophosphate and glucose-1-phosphate, which can then be used by the cell. The sequence is that of Protein UshA (ushA) from Salmonella pullorum.